Here is a 279-residue protein sequence, read N- to C-terminus: uncharacterized protein (279 aa).

To M.tuberculosis Rv2569c.

This is an uncharacterized protein from Mycobacterium leprae (strain TN).